Reading from the N-terminus, the 402-residue chain is Mediator of RNA polymerase II transcription subunit 27 (402 aa).

Positions 1–23 are enriched in polar residues; sequence MQTLHQSQLLQNPAEAANNQSES. Positions 1 to 30 are disordered; the sequence is MQTLHQSQLLQNPAEAANNQSESDAPPKQV. The stretch at 28-49 forms a coiled coil; that stretch reads KQVAQAMERLNQAARVIADIRL.

It belongs to the Mediator complex subunit 27 family. In terms of assembly, component of the Mediator complex.

Its subcellular location is the nucleus. Its function is as follows. Component of the Mediator complex, a coactivator involved in the regulated transcription of nearly all RNA polymerase II-dependent genes. Mediator functions as a bridge to convey information from gene-specific regulatory proteins to the basal RNA polymerase II transcription machinery. The Mediator complex, having a compact conformation in its free form, is recruited to promoters by direct interactions with regulatory proteins and serves for the assembly of a functional preinitiation complex with RNA polymerase II and the general transcription factors. In Arabidopsis thaliana (Mouse-ear cress), this protein is Mediator of RNA polymerase II transcription subunit 27 (MED27).